Consider the following 357-residue polypeptide: DNA replication and repair protein RecF (357 aa).

30–37 is an ATP binding site; it reads GANGSGKT.

It belongs to the RecF family.

The protein localises to the cytoplasm. Functionally, the RecF protein is involved in DNA metabolism; it is required for DNA replication and normal SOS inducibility. RecF binds preferentially to single-stranded, linear DNA. It also seems to bind ATP. The polypeptide is DNA replication and repair protein RecF (Escherichia coli O6:K15:H31 (strain 536 / UPEC)).